The primary structure comprises 382 residues: Succinyl-diaminopimelate desuccinylase (382 aa).

Position 71 (histidine 71) interacts with Zn(2+). Aspartate 73 is an active-site residue. Position 105 (aspartate 105) interacts with Zn(2+). Glutamate 139 serves as the catalytic Proton acceptor. Zn(2+) contacts are provided by glutamate 140, glutamate 168, and histidine 354.

It belongs to the peptidase M20A family. DapE subfamily. In terms of assembly, homodimer. Zn(2+) serves as cofactor. Requires Co(2+) as cofactor.

The catalysed reaction is N-succinyl-(2S,6S)-2,6-diaminopimelate + H2O = (2S,6S)-2,6-diaminopimelate + succinate. The protein operates within amino-acid biosynthesis; L-lysine biosynthesis via DAP pathway; LL-2,6-diaminopimelate from (S)-tetrahydrodipicolinate (succinylase route): step 3/3. Functionally, catalyzes the hydrolysis of N-succinyl-L,L-diaminopimelic acid (SDAP), forming succinate and LL-2,6-diaminopimelate (DAP), an intermediate involved in the bacterial biosynthesis of lysine and meso-diaminopimelic acid, an essential component of bacterial cell walls. This is Succinyl-diaminopimelate desuccinylase from Stutzerimonas stutzeri (strain A1501) (Pseudomonas stutzeri).